Here is a 291-residue protein sequence, read N- to C-terminus: Orotidine 5'-phosphate decarboxylase (291 aa).

The Proton donor role is filled by Lys-97.

The protein belongs to the OMP decarboxylase family. Type 2 subfamily.

It carries out the reaction orotidine 5'-phosphate + H(+) = UMP + CO2. It participates in pyrimidine metabolism; UMP biosynthesis via de novo pathway; UMP from orotate: step 2/2. This Clostridium kluyveri (strain ATCC 8527 / DSM 555 / NBRC 12016 / NCIMB 10680 / K1) protein is Orotidine 5'-phosphate decarboxylase.